We begin with the raw amino-acid sequence, 716 residues long: Protein C-mannosyl-transferase DPY19L3 (716 aa).

At Met-1–Lys-43 the chain is on the cytoplasmic side. The chain crosses the membrane as a helical span at residues Ile-44–Tyr-64. The Lumenal portion of the chain corresponds to Leu-65 to Glu-154. Asn-118 is a glycosylation site (N-linked (GlcNAc...) asparagine). A helical transmembrane segment spans residues Pro-155–Ser-182. Topologically, residues Gly-183–Thr-184 are cytoplasmic. Residues Trp-185–Thr-197 constitute an intramembrane region (name=3). The Cytoplasmic portion of the chain corresponds to Asn-198–Trp-215. The name=4 intramembrane region spans Ala-216–Phe-230. The Cytoplasmic portion of the chain corresponds to Leu-231–Ser-239. The chain crosses the membrane as a helical span at residues Glu-240–Leu-256. Topologically, residues Thr-257–Gln-262 are lumenal. The helical transmembrane segment at Phe-263 to Asp-279 threads the bilayer. Over Met-280–Leu-289 the chain is Cytoplasmic. A helical membrane pass occupies residues Tyr-290–Phe-306. Over Asn-307–Ser-308 the chain is Lumenal. Residues Met-309–Leu-323 traverse the membrane as a helical segment. Residues Ile-324–Leu-338 lie on the Cytoplasmic side of the membrane. A helical transmembrane segment spans residues Thr-339–Asn-359. The Lumenal segment spans residues Asn-360–Glu-414. The chain crosses the membrane as a helical span at residues Thr-415–Phe-437. The Cytoplasmic portion of the chain corresponds to His-438–Tyr-465. Residues Asn-466–Tyr-485 form a helical membrane-spanning segment. Residues Leu-486–Trp-487 lie on the Lumenal side of the membrane. A helical transmembrane segment spans residues Thr-488 to Leu-499. At Cys-500–Val-522 the chain is on the cytoplasmic side. Residues Leu-523 to Ser-539 form a helical membrane-spanning segment. Residues Trp-540–Lys-716 are Lumenal-facing. Asn-704 carries N-linked (GlcNAc...) asparagine glycosylation.

This sequence belongs to the dpy-19 family.

Its subcellular location is the endoplasmic reticulum membrane. The enzyme catalyses L-tryptophyl-[protein] + a di-trans,poly-cis-dolichyl beta-D-mannosyl phosphate = C-alpha-D-mannosyl-L-tryptophyl-[protein] + a di-trans,poly-cis-dolichyl phosphate + H(+). The protein operates within protein modification; protein glycosylation. Its function is as follows. C-mannosyltransferase that mediates C-mannosylation of tryptophan residues on target proteins. The reaction occurs on the luminal side of the endoplasmic reticulum and involves the transfer of a mannose unit from a dolichylphosphate mannose (Dol-P-Man) donor to an acceptor protein containing a WxxW or WxxC consensus sequence. C-mannosylates RSPO1, a Wnt signaling regulator, preferentially at the first Trp residue in the sequence WxxW. C-mannosylates the netrin receptor UNC5A, preferentially at the third tryptophan of WxxWxxWxxC sequence. In Mus musculus (Mouse), this protein is Protein C-mannosyl-transferase DPY19L3 (Dpy19l3).